Reading from the N-terminus, the 96-residue chain is Class I hydrophobin 2 (96 aa).

The N-terminal stretch at 1–15 is a signal peptide; the sequence is MFKALIVALAAVAAA. 4 cysteine pairs are disulfide-bonded: Cys-28–Cys-77, Cys-34–Cys-71, Cys-35–Cys-55, and Cys-78–Cys-91.

The protein belongs to the fungal hydrophobin family.

Its subcellular location is the secreted. The protein localises to the cell wall. Functionally, aerial growth, conidiation, and dispersal of filamentous fungi in the environment rely upon a capability of their secreting small amphipathic proteins called hydrophobins (HPBs) with low sequence identity. Class I can self-assemble into an outermost layer of rodlet bundles on aerial cell surfaces, conferring cellular hydrophobicity that supports fungal growth, development and dispersal; whereas Class II form highly ordered films at water-air interfaces through intermolecular interactions but contribute nothing to the rodlet structure. Hyd2 plays a neglectable role in hyphal growth and asexual development and does not seem involved in cellular hydrophobicity, conidial adhesion, stress tolerance nor insect pathogenicity. The polypeptide is Class I hydrophobin 2 (Metarhizium robertsii (strain ARSEF 23 / ATCC MYA-3075) (Metarhizium anisopliae (strain ARSEF 23))).